The sequence spans 162 residues: MAAPKGNRFWEARSSHGRNPKFESPEALWAACCEYFEWVEANPLWEMKAFSYQGEVIQEPIAKMRAMTITGLTLFIDVTLETWRTYRLREDLSEVVTRAEQVIYDQKFSGAAADLLNANIIARDLGLKEQSQVEDVTPDKGDRDKRRSRIKELFNRGTGRDS.

The segment at 7–27 (NRFWEARSSHGRNPKFESPEA) is helix-turn-helix (HTH). The interval 132–162 (QVEDVTPDKGDRDKRRSRIKELFNRGTGRDS) is disordered. The segment covering 137-162 (TPDKGDRDKRRSRIKELFNRGTGRDS) has biased composition (basic and acidic residues). An interaction with the terminase large subunit gp2 region spans residues 140–162 (KGDRDKRRSRIKELFNRGTGRDS). The DNA-binding element occupies 143 to 152 (RDKRRSRIKE).

It belongs to the P22likvirus small terminase family. Homononamer; forms a ring-like structure through which genomic DNA is translocated into the capsid. Interacts with the terminase small subunit; the active complex is composed of dimer of terminase large subunits and a nonamer ring of terminase small subunits.

Functionally, the terminase small subunit binds to the packaging initiation site and regulates the ATPase activity of the terminase large subunit. The terminase lies at a unique vertex of the procapsid and is composed of two subunits, a small terminase subunit involved in viral DNA recognition (packaging 'pac' sequence), and a large terminase subunit possessing endonucleolytic and ATPase activities. Both terminase subunits heterooligomerize and are docked on the portal protein to form the packaging machine. The terminase large subunit exhibits endonuclease activity and cleaves the viral genome concatemer once the capsid is full (headful packaging). Once the capsid is packaged with the DNA, the terminase complex is substituted by neck proteins. The sequence is that of Terminase, small subunit (3) from Salmonella typhimurium (Bacteriophage P22).